Here is a 357-residue protein sequence, read N- to C-terminus: Dehydrogenase FUB6 (357 aa).

Belongs to the zinc-containing alcohol dehydrogenase family. Quinone oxidoreductase subfamily.

The protein operates within mycotoxin biosynthesis. Functionally, dehydrogenase; part of the gene cluster that mediates the biosynthesis of fusaric acid, a mycotoxin with low to moderate toxicity to animals and humans, but with high phytotoxic properties. L-aspartate is suggested as fusaric acid amino acid precursor that is activated and further processed to O-acetyl-L-homoserine by cluster enzymes aspartate kinase FUB3 and homoserine O-acetyltransferase FUB5, as well as enzymes of the primary metabolism. The polyketide synthase (PKS) FUB1 generates the triketide trans-2-hexenal which is presumptively released by the hydrolase FUB4 and linked to the NRPS-bound amino acid precursor by NAD(P)-dependent dehydrogenase FUB6. FUB1, FUB4, and the non-canonical NRPS Fub8 may form an enzyme complex. Further processing of the NRPS-bound intermediate might be carried out by FUB6 and the O-acetylhomoserine FUB7, enabling a spontaneous electrocyclization to close the carbon backbone of fusaric acid. Dihydrofusaric acid is likely to be released via reduction by the thioester reductase (TR) domain of FUB8 whereupon the final oxidation to fusaric acid may (also) be performed by the FMN-dependent dehydrogenase FUB9. The sequence is that of Dehydrogenase FUB6 from Gibberella moniliformis (strain M3125 / FGSC 7600) (Maize ear and stalk rot fungus).